Reading from the N-terminus, the 448-residue chain is Methylenetetrahydrofolate--tRNA-(uracil-5-)-methyltransferase TrmFO (448 aa).

An FAD-binding site is contributed by 10–15 (GAGLAG).

Belongs to the MnmG family. TrmFO subfamily. FAD serves as cofactor.

The protein localises to the cytoplasm. It catalyses the reaction uridine(54) in tRNA + (6R)-5,10-methylene-5,6,7,8-tetrahydrofolate + NADH + H(+) = 5-methyluridine(54) in tRNA + (6S)-5,6,7,8-tetrahydrofolate + NAD(+). The enzyme catalyses uridine(54) in tRNA + (6R)-5,10-methylene-5,6,7,8-tetrahydrofolate + NADPH + H(+) = 5-methyluridine(54) in tRNA + (6S)-5,6,7,8-tetrahydrofolate + NADP(+). Functionally, catalyzes the folate-dependent formation of 5-methyl-uridine at position 54 (M-5-U54) in all tRNAs. In Lactococcus lactis subsp. cremoris (strain MG1363), this protein is Methylenetetrahydrofolate--tRNA-(uracil-5-)-methyltransferase TrmFO.